We begin with the raw amino-acid sequence, 156 residues long: CD-NTase/cGAS isopeptidase (156 aa).

An MPN domain is found at Ile9–Ile147. Glu38 acts as the Proton donor/acceptor in catalysis. Zn(2+) is bound by residues His100, His102, and Asp113. The JAMM motif signature appears at His100–Asp113.

Belongs to the peptidase M67B family. Cap3 isopeptidase subfamily.

Metalloprotease priming reversal component of a CBASS antivirus system. CBASS (cyclic oligonucleotide-based antiphage signaling system) provides immunity against bacteriophages. The CD-NTase protein (DncV) synthesizes cyclic nucleotides in response to infection; these serve as specific second messenger signals. The signals activate a diverse range of effectors, leading to bacterial cell death and thus abortive phage infection. A type II-A(GA) CBASS system. Functionally, reverses the primed state of DncV, the CD-NTase, cleaving it from cellular proteins. Cleaves a Sumo-DncV-DncV fusion protein precisely between the 2 DncV moieties. In terms of biological role, protects E.coli against phage infection. When capV and dncV are introduced in E.coli MG1655 there is 1000-fold protection against phage P1; protection against other phage (T4, T5 and T6) requires the 2 subsequent genes. In another paper the capV-dncV-cap2-cap3 operon gives 10(4)-10(5)-fold protection against phages lambda, T2, T4 and T6, about 1000-fold protection against P1 and 10-fold protection against T5. The sequence is that of CD-NTase/cGAS isopeptidase from Escherichia coli (strain TW11681).